The following is a 265-amino-acid chain: Mlc titration factor A (265 aa).

Residues histidine 111, histidine 148, histidine 152, and glutamate 211 each contribute to the Zn(2+) site.

The protein belongs to the MtfA family. In terms of assembly, interacts with Mlc with high affinity. The cofactor is Zn(2+).

The protein resides in the cytoplasm. With respect to regulation, proteolytic activity is stimulated by interaction with Mlc. Addition of the chelators EDTA or phenanthroline significantly reduces the peptidase activity, whereas the addition of other protease inhibitors has much less effect. In terms of biological role, involved in the modulation of the activity of the glucose-phosphotransferase system (glucose-PTS). Interacts with the transcriptional repressor Mlc, preventing its interaction with DNA and leading to the modulation of expression of genes regulated by Mlc, including ptsG, which encodes the PTS system glucose-specific EIICB component. Shows zinc-dependent metallopeptidase activity. In vitro, can cleave several artificial substrates. The greatest activity and specificity is observed for L-alanine fused to 4-nitroanilide (L-alanine-pNA). Shows significantly lower activity towards L-arginine-pNA, L-proline-pNA, hippuryl-L-phenylalanine and hippuryl-L-arginine, and cannot use FTC-casein. Mlc does not appear to be a biologically relevant peptidase substrate. Biologically relevant targets may have a function in growth transition under changing environmental conditions. The sequence is that of Mlc titration factor A from Escherichia coli (strain K12).